Reading from the N-terminus, the 136-residue chain is Large ribosomal subunit protein uL16 (136 aa).

Belongs to the universal ribosomal protein uL16 family. As to quaternary structure, part of the 50S ribosomal subunit.

In terms of biological role, binds 23S rRNA and is also seen to make contacts with the A and possibly P site tRNAs. The protein is Large ribosomal subunit protein uL16 of Rickettsia felis (strain ATCC VR-1525 / URRWXCal2) (Rickettsia azadi).